A 429-amino-acid polypeptide reads, in one-letter code: Protein arginine N-methyltransferase 2 (429 aa).

Disordered stretches follow at residues proline 41 to glutamate 76 and alanine 137 to proline 180. Residues alanine 137–proline 163 are compositionally biased toward acidic residues. Positions glutamate 164–threonine 174 are enriched in low complexity. An RMT2 domain is found at leucine 190 to glycine 429. Residues tyrosine 199, methionine 228, phenylalanine 250–isoleucine 255, glutamate 271–histidine 273, tryptophan 308–glutamine 309, and aspartate 328 each bind S-adenosyl-L-methionine.

This sequence belongs to the class I-like SAM-binding methyltransferase superfamily. RMT2 methyltransferase family. In terms of assembly, monomer.

It is found in the cytoplasm. The protein localises to the nucleus. S-adenosyl-L-methionine-dependent protein-arginine N-methyltransferase that methylates the delta-nitrogen atom of arginine residues to form N5-methylarginine (type IV) in target proteins. Monomethylates ribosomal protein L12. This is Protein arginine N-methyltransferase 2 from Neurospora crassa (strain ATCC 24698 / 74-OR23-1A / CBS 708.71 / DSM 1257 / FGSC 987).